We begin with the raw amino-acid sequence, 727 residues long: Probable glutamate carboxypeptidase ARB_02390 (727 aa).

The signal sequence occupies residues methionine 1–glycine 18. N-linked (GlcNAc...) asparagine glycosylation is found at asparagine 60 and asparagine 80. The PA domain maps to alanine 158–leucine 296. Residue arginine 197 participates in substrate binding. Asparagine 223 carries N-linked (GlcNAc...) asparagine glycosylation. The interval phenylalanine 255–valine 279 is disordered. Residues threonine 261 and tyrosine 264 each coordinate Ca(2+). Residues serine 266–leucine 565 form an NAALADase region. N-linked (GlcNAc...) asparagine glycans are attached at residues asparagine 310, asparagine 319, and asparagine 353. Residue histidine 366 participates in Zn(2+) binding. Glutamate 414 serves as the catalytic For NAALADase activity. Glutamate 415 is a binding site for Zn(2+). Residues glutamate 423 and glutamate 426 each coordinate Ca(2+). Residue aspartate 443 coordinates Zn(2+). Residues threonine 516–alanine 518 and tyrosine 530 each bind substrate. Histidine 531 is a Zn(2+) binding site. Serine 604 acts as the Charge relay system in catalysis. N-linked (GlcNAc...) asparagine glycosylation is present at asparagine 614. Catalysis depends on histidine 665, which acts as the Charge relay system. Glycine 675 to tyrosine 676 contributes to the substrate binding site. Residue asparagine 692 is glycosylated (N-linked (GlcNAc...) asparagine).

This sequence belongs to the peptidase M28 family. M28B subfamily. The cofactor is Zn(2+).

The protein resides in the secreted. It catalyses the reaction Release of an unsubstituted, C-terminal glutamyl residue, typically from Ac-Asp-Glu or folylpoly-gamma-glutamates.. Has both folate hydrolase and N-acetylated-alpha-linked-acidic dipeptidase (NAALADase) activity. Also exhibits a dipeptidyl-peptidase IV type activity. In Arthroderma benhamiae (strain ATCC MYA-4681 / CBS 112371) (Trichophyton mentagrophytes), this protein is Probable glutamate carboxypeptidase ARB_02390.